The following is a 390-amino-acid chain: Phosphopentomutase (390 aa).

Mn(2+) contacts are provided by Asp-9, Asp-283, His-288, Asp-324, His-325, and His-336.

This sequence belongs to the phosphopentomutase family. Requires Mn(2+) as cofactor.

It is found in the cytoplasm. It catalyses the reaction 2-deoxy-alpha-D-ribose 1-phosphate = 2-deoxy-D-ribose 5-phosphate. The catalysed reaction is alpha-D-ribose 1-phosphate = D-ribose 5-phosphate. It participates in carbohydrate degradation; 2-deoxy-D-ribose 1-phosphate degradation; D-glyceraldehyde 3-phosphate and acetaldehyde from 2-deoxy-alpha-D-ribose 1-phosphate: step 1/2. Its function is as follows. Isomerase that catalyzes the conversion of deoxy-ribose 1-phosphate (dRib-1-P) and ribose 1-phosphate (Rib-1-P) to deoxy-ribose 5-phosphate (dRib-5-P) and ribose 5-phosphate (Rib-5-P), respectively. The protein is Phosphopentomutase of Thermotoga maritima (strain ATCC 43589 / DSM 3109 / JCM 10099 / NBRC 100826 / MSB8).